A 59-amino-acid polypeptide reads, in one-letter code: Large ribosomal subunit protein bL33 (59 aa).

Positions 26–59 (RYTTTKNKKNNTERLVLKKYNPNLKKHTEHKEIK) are disordered.

The protein belongs to the bacterial ribosomal protein bL33 family.

This is Large ribosomal subunit protein bL33 from Chlorobium phaeobacteroides (strain BS1).